The sequence spans 445 residues: uncharacterized protein (445 aa).

His-66 serves as a coordination point for Zn(2+). The Proton acceptor role is filled by Glu-69. Residues His-70 and Glu-146 each coordinate Zn(2+). Residues 232–251 (GRQSAPPRKSTGRINGGPAL) form a disordered region.

Belongs to the peptidase M16 family. Requires Zn(2+) as cofactor.

This is an uncharacterized protein from Mycobacterium leprae (strain TN).